Here is a 91-residue protein sequence, read N- to C-terminus: Small ribosomal subunit protein bS20 (91 aa).

This sequence belongs to the bacterial ribosomal protein bS20 family.

In terms of biological role, binds directly to 16S ribosomal RNA. The chain is Small ribosomal subunit protein bS20 from Mycoplasma mobile (strain ATCC 43663 / 163K / NCTC 11711) (Mesomycoplasma mobile).